The following is a 445-amino-acid chain: MIDRPIHVIGGGLAGTEAAWQIAQAGIPVILHEMRPIRSSPAHHSQFLAELVCSNSFGAMAVDRATGLLHEELRRLNSLVIAQADQHSVPAGGALAVDRGVFSRNLTEILANHPLVTLKRQEITEIPRDGIVVLTTGPLTSAALAADLQNFAGLDYLSFFDAASPIILGESIDRSIAFLASRYDKGEAAYLNCPMDREQYLHFWQELKQAEQAELKDFERENAKFFEACLPIEELASRGEDTMRFGPLKPVGLADPRYPDQRPYAVIQLRMEDKAGQLWNMVGFQTNLKWGEQTRVFRLIPGLEKAEFVRMGVMHKNTFINSPQLLSSSLQFKSRPTLLAAGQLIGTEGYTAAAAGGWLAGTNAARLALGLETVTLPTTTMMGSLFEFISSAEPKHFQPMPPNFGILPNFTRKIRNKRERYGQYADRSLQDLEAWMNQLKTPCLV.

10 to 15 (GGGLAG) contributes to the FAD binding site.

Belongs to the MnmG family. TrmFO subfamily. The cofactor is FAD.

It is found in the cytoplasm. It carries out the reaction uridine(54) in tRNA + (6R)-5,10-methylene-5,6,7,8-tetrahydrofolate + NADH + H(+) = 5-methyluridine(54) in tRNA + (6S)-5,6,7,8-tetrahydrofolate + NAD(+). It catalyses the reaction uridine(54) in tRNA + (6R)-5,10-methylene-5,6,7,8-tetrahydrofolate + NADPH + H(+) = 5-methyluridine(54) in tRNA + (6S)-5,6,7,8-tetrahydrofolate + NADP(+). Catalyzes the folate-dependent formation of 5-methyl-uridine at position 54 (M-5-U54) in all tRNAs. The polypeptide is Methylenetetrahydrofolate--tRNA-(uracil-5-)-methyltransferase TrmFO (Microcystis aeruginosa (strain NIES-843 / IAM M-2473)).